A 129-amino-acid chain; its full sequence is MARKTNTRKRRVKKNIESGIAHIRSTFNNTIVTITDVHGNAISWSSAGALGFKGSRKSTPFAAQMAAEAAAKASMEHGMKTVEVNVKGPGAGREAAIRALQAAGLEITAIKDVTPVPHNGCRPPKRRRV.

This sequence belongs to the universal ribosomal protein uS11 family. As to quaternary structure, part of the 30S ribosomal subunit. Interacts with proteins S7 and S18. Binds to IF-3.

Located on the platform of the 30S subunit, it bridges several disparate RNA helices of the 16S rRNA. Forms part of the Shine-Dalgarno cleft in the 70S ribosome. This chain is Small ribosomal subunit protein uS11, found in Anoxybacillus flavithermus (strain DSM 21510 / WK1).